Reading from the N-terminus, the 99-residue chain is Large ribosomal subunit protein uL23 (99 aa).

Belongs to the universal ribosomal protein uL23 family. Part of the 50S ribosomal subunit. Contacts protein L29, and trigger factor when it is bound to the ribosome.

Its function is as follows. One of the early assembly proteins it binds 23S rRNA. One of the proteins that surrounds the polypeptide exit tunnel on the outside of the ribosome. Forms the main docking site for trigger factor binding to the ribosome. The protein is Large ribosomal subunit protein uL23 of Haemophilus influenzae (strain 86-028NP).